The sequence spans 243 residues: Venom nerve growth factor 5 (243 aa).

The N-terminal stretch at methionine 1–alanine 18 is a signal peptide. The propeptide occupies alanine 19–arginine 125. Residues glycine 47–aspartate 66 are compositionally biased toward basic and acidic residues. The disordered stretch occupies residues glycine 47–glutamine 67. Intrachain disulfides connect cysteine 139–cysteine 204, cysteine 182–cysteine 232, and cysteine 192–cysteine 234. The N-linked (GlcNAc...) asparagine glycan is linked to asparagine 148.

It belongs to the NGF-beta family. In terms of assembly, homodimer; non-covalently linked. As to expression, expressed by the venom gland.

Its subcellular location is the secreted. Nerve growth factor is important for the development and maintenance of the sympathetic and sensory nervous systems. It stimulates division and differentiation of sympathetic and embryonic sensory neurons as well as basal forebrain cholinergic neurons in the brain. Its relevance in the snake venom is not clear. However, it has been shown to inhibit metalloproteinase-dependent proteolysis of platelet glycoprotein Ib alpha, suggesting a metalloproteinase inhibition to prevent metalloprotease autodigestion and/or protection against prey proteases. Binds a lipid between the two protein chains in the homodimer. The lipid-bound form promotes histamine relase from mouse mast cells, contrary to the lipid-free form. This is Venom nerve growth factor 5 from Tropidechis carinatus (Australian rough-scaled snake).